A 547-amino-acid polypeptide reads, in one-letter code: ATP synthase subunit alpha (547 aa).

An ATP-binding site is contributed by 172 to 179 (GDRKTGKT).

This sequence belongs to the ATPase alpha/beta chains family. In terms of assembly, F-type ATPases have 2 components, CF(1) - the catalytic core - and CF(0) - the membrane proton channel. CF(1) has five subunits: alpha(3), beta(3), gamma(1), delta(1), epsilon(1). CF(0) has three main subunits: a(1), b(2) and c(9-12). The alpha and beta chains form an alternating ring which encloses part of the gamma chain. CF(1) is attached to CF(0) by a central stalk formed by the gamma and epsilon chains, while a peripheral stalk is formed by the delta and b chains.

Its subcellular location is the cell membrane. The enzyme catalyses ATP + H2O + 4 H(+)(in) = ADP + phosphate + 5 H(+)(out). In terms of biological role, produces ATP from ADP in the presence of a proton gradient across the membrane. The alpha chain is a regulatory subunit. This chain is ATP synthase subunit alpha, found in Rhodococcus erythropolis (strain PR4 / NBRC 100887).